The sequence spans 485 residues: UDP-glycosyltransferase 71B2 (485 aa).

UDP-alpha-D-glucose contacts are provided by residues Ser287, 354 to 356 (APQ), 371 to 379 (HCGWNSTLE), and 393 to 396 (YAEQ).

The protein belongs to the UDP-glycosyltransferase family.

Glucosyltransferase that glucosylates the cell wall inhibitor hypostatin in vivo to form a bioactive glucoside. The protein is UDP-glycosyltransferase 71B2 (UGT71B2) of Arabidopsis thaliana (Mouse-ear cress).